The chain runs to 208 residues: N-(5'-phosphoribosyl)anthranilate isomerase (208 aa).

The protein belongs to the TrpF family.

The enzyme catalyses N-(5-phospho-beta-D-ribosyl)anthranilate = 1-(2-carboxyphenylamino)-1-deoxy-D-ribulose 5-phosphate. It functions in the pathway amino-acid biosynthesis; L-tryptophan biosynthesis; L-tryptophan from chorismate: step 3/5. This Methanococcus maripaludis (strain C5 / ATCC BAA-1333) protein is N-(5'-phosphoribosyl)anthranilate isomerase.